Consider the following 492-residue polypeptide: Phosphatidylglycerol--prolipoprotein diacylglyceryl transferase (492 aa).

Helical transmembrane passes span isoleucine 40 to tryptophan 60, alanine 72 to proline 92, valine 106 to alanine 126, alanine 133 to leucine 153, glutamine 184 to leucine 204, isoleucine 214 to leucine 234, valine 361 to isoleucine 381, glycine 409 to isoleucine 429, and leucine 441 to isoleucine 461. Arginine 230 serves as a coordination point for a 1,2-diacyl-sn-glycero-3-phospho-(1'-sn-glycerol).

This sequence belongs to the Lgt family.

It localises to the cell inner membrane. It catalyses the reaction L-cysteinyl-[prolipoprotein] + a 1,2-diacyl-sn-glycero-3-phospho-(1'-sn-glycerol) = an S-1,2-diacyl-sn-glyceryl-L-cysteinyl-[prolipoprotein] + sn-glycerol 1-phosphate + H(+). It functions in the pathway protein modification; lipoprotein biosynthesis (diacylglyceryl transfer). Catalyzes the transfer of the diacylglyceryl group from phosphatidylglycerol to the sulfhydryl group of the N-terminal cysteine of a prolipoprotein, the first step in the formation of mature lipoproteins. The protein is Phosphatidylglycerol--prolipoprotein diacylglyceryl transferase of Rhodopirellula baltica (strain DSM 10527 / NCIMB 13988 / SH1).